A 185-amino-acid chain; its full sequence is Translocon-associated protein subunit gamma (185 aa).

Met1 carries the post-translational modification N-acetylmethionine. Residues 1 to 27 (MAPKGSSKQQSEEDLLLQDFSRNLSAK) lie on the Lumenal side of the membrane. Residues Ser7 and Ser11 each carry the phosphoserine modification. The helical transmembrane segment at 28 to 48 (SSALFFGNAFIVSAIPIWLYW) threads the bilayer. The Cytoplasmic portion of the chain corresponds to 49–54 (RIWHMD). The helical transmembrane segment at 55–76 (LIQSAVLYSVMTLVSTYLVAFA) threads the bilayer. Residues 77–135 (YKNVKFVLKHKVAQKREDAVSKEVTRKLSEADNRKMSRKEKDERILWKKNEVADYEATT) are Lumenal-facing. The residue at position 105 (Ser105) is a Phosphoserine. A helical transmembrane segment spans residues 136-157 (FSIFYNNTLFLVVVIVASFFIL). Over 158 to 163 (KNFNPT) the chain is Cytoplasmic. The chain crosses the membrane as a helical span at residues 164–184 (VNYILSISASSGLIALLSTGS).

It belongs to the TRAP-gamma family. As to quaternary structure, heterotetramer of TRAP-alpha, TRAP-beta, TRAP-delta and TRAP-gamma.

Its subcellular location is the endoplasmic reticulum membrane. Its function is as follows. TRAP proteins are part of a complex whose function is to bind calcium to the ER membrane and thereby regulate the retention of ER resident proteins. In Homo sapiens (Human), this protein is Translocon-associated protein subunit gamma (SSR3).